The primary structure comprises 72 residues: Large ribosomal subunit protein bL31c (72 aa).

The protein belongs to the bacterial ribosomal protein bL31 family. Type A subfamily. As to quaternary structure, part of the 50S ribosomal subunit.

The protein resides in the plastid. It localises to the chloroplast. Functionally, binds the 23S rRNA. The chain is Large ribosomal subunit protein bL31c (rpl31) from Thalassiosira pseudonana (Marine diatom).